The chain runs to 215 residues: uncharacterized protein (215 aa).

The N-terminal stretch at 1–29 (MDKVQSGFLILFLFLMECQLHLCLPYADG) is a signal peptide. At 30–100 (LHPTGNITGL…IIRHRPALVK (71 aa)) the chain is on the extracellular side. Residues 101 to 121 (VILISSVAFSIALICGMAISY) traverse the membrane as a helical segment. Residues 122 to 215 (MIYRLAQAEE…ASHNGKMEDL (94 aa)) are Cytoplasmic-facing. The interval 191-215 (LKEEQNSVTENKTKNASHNGKMEDL) is disordered. Residues 196 to 208 (NSVTENKTKNASH) are compositionally biased toward polar residues.

The protein resides in the membrane. This is an uncharacterized protein from Homo sapiens (Human).